The chain runs to 473 residues: Ribulose bisphosphate carboxylase large chain (473 aa).

The propeptide occupies 1–2 (MS). An N-acetylproline modification is found at Pro-3. The residue at position 14 (Lys-14) is an N6,N6,N6-trimethyllysine. Residues Asn-123 and Thr-173 each coordinate substrate. Lys-175 acts as the Proton acceptor in catalysis. Lys-177 contributes to the substrate binding site. Mg(2+)-binding residues include Lys-201, Asp-203, and Glu-204. The residue at position 201 (Lys-201) is an N6-carboxylysine. Catalysis depends on His-294, which acts as the Proton acceptor. Arg-295, His-327, and Ser-379 together coordinate substrate.

The protein belongs to the RuBisCO large chain family. Type I subfamily. Heterohexadecamer of 8 large chains and 8 small chains; disulfide-linked. The disulfide link is formed within the large subunit homodimers. Mg(2+) serves as cofactor. Post-translationally, the disulfide bond which can form in the large chain dimeric partners within the hexadecamer appears to be associated with oxidative stress and protein turnover.

It localises to the plastid. The protein resides in the chloroplast. The enzyme catalyses 2 (2R)-3-phosphoglycerate + 2 H(+) = D-ribulose 1,5-bisphosphate + CO2 + H2O. It carries out the reaction D-ribulose 1,5-bisphosphate + O2 = 2-phosphoglycolate + (2R)-3-phosphoglycerate + 2 H(+). RuBisCO catalyzes two reactions: the carboxylation of D-ribulose 1,5-bisphosphate, the primary event in carbon dioxide fixation, as well as the oxidative fragmentation of the pentose substrate in the photorespiration process. Both reactions occur simultaneously and in competition at the same active site. In Cajanus cajan (Pigeon pea), this protein is Ribulose bisphosphate carboxylase large chain.